Consider the following 1138-residue polypeptide: Trafficking protein particle complex subunit 9 (1138 aa).

Phosphoserine occurs at positions 557 and 944.

This sequence belongs to the NIBP family. As to quaternary structure, component of the multisubunit TRAPP (transport protein particle) complex, which includes at least TRAPPC2, TRAPPC2L, TRAPPC3, TRAPPC3L, TRAPPC4, TRAPPC5, TRAPPC8, TRAPPC9, TRAPPC10, TRAPPC11 and TRAPPC12. Directly interacts with IKBKB and MAP3K14.

It localises to the golgi apparatus. It is found in the cis-Golgi network. Its subcellular location is the endoplasmic reticulum. The protein resides in the cytoplasm. Functions as an activator of NF-kappa-B through increased phosphorylation of the IKK complex. May function in neuronal cells differentiation. May play a role in vesicular transport from endoplasmic reticulum to Golgi. The sequence is that of Trafficking protein particle complex subunit 9 (TRAPPC9) from Bos taurus (Bovine).